The sequence spans 301 residues: Lipoyl synthase (301 aa).

Residues Cys-53, Cys-58, Cys-64, Cys-79, Cys-83, Cys-86, and Ser-290 each coordinate [4Fe-4S] cluster. Residues 65–279 form the Radical SAM core domain; the sequence is WSRKTATYML…RIYGKSIGFK (215 aa).

The protein belongs to the radical SAM superfamily. Lipoyl synthase family. It depends on [4Fe-4S] cluster as a cofactor.

It is found in the cytoplasm. The catalysed reaction is [[Fe-S] cluster scaffold protein carrying a second [4Fe-4S](2+) cluster] + N(6)-octanoyl-L-lysyl-[protein] + 2 oxidized [2Fe-2S]-[ferredoxin] + 2 S-adenosyl-L-methionine + 4 H(+) = [[Fe-S] cluster scaffold protein] + N(6)-[(R)-dihydrolipoyl]-L-lysyl-[protein] + 4 Fe(3+) + 2 hydrogen sulfide + 2 5'-deoxyadenosine + 2 L-methionine + 2 reduced [2Fe-2S]-[ferredoxin]. The protein operates within protein modification; protein lipoylation via endogenous pathway; protein N(6)-(lipoyl)lysine from octanoyl-[acyl-carrier-protein]: step 2/2. In terms of biological role, catalyzes the radical-mediated insertion of two sulfur atoms into the C-6 and C-8 positions of the octanoyl moiety bound to the lipoyl domains of lipoate-dependent enzymes, thereby converting the octanoylated domains into lipoylated derivatives. The sequence is that of Lipoyl synthase from Leptospira interrogans serogroup Icterohaemorrhagiae serovar Lai (strain 56601).